The following is a 218-amino-acid chain: Replication protein RepB (218 aa).

Residues Met1–Arg26 form a disordered region. Residues Lys16–Arg26 are compositionally biased toward basic residues.

This sequence belongs to the Gram-positive plasmids replication protein type 2 family.

Its function is as follows. Is essential for plasmid replication. Nicks the positive strand at the plus origin of replication. This chain is Replication protein RepB (repB), found in Lactiplantibacillus plantarum (Lactobacillus plantarum).